The sequence spans 254 residues: Alcohol dehydrogenase (254 aa).

10 to 33 (FVAGLGGIGLDTSKGIVKAGPKNL) lines the NAD(+) pocket. A substrate-binding site is contributed by serine 138. Tyrosine 151 acts as the Proton acceptor in catalysis.

Belongs to the short-chain dehydrogenases/reductases (SDR) family. In terms of assembly, homodimer.

The enzyme catalyses a primary alcohol + NAD(+) = an aldehyde + NADH + H(+). The catalysed reaction is a secondary alcohol + NAD(+) = a ketone + NADH + H(+). In Drosophila immigrans (Fruit fly), this protein is Alcohol dehydrogenase (Adh).